The primary structure comprises 206 residues: uncharacterized protein (206 aa).

Residues 166–186 (FYTGLSVIVGGATALALGLFF) form a helical membrane-spanning segment.

The protein resides in the membrane. This is an uncharacterized protein from Dictyostelium discoideum (Social amoeba).